A 237-amino-acid chain; its full sequence is MDKVCAVFGGSRGIGRAVAQLMARKGYRLAVIARNLEGAKAAAGDLGGDHLAFSCDVAKEHDVQNTFEELEKHLGRVNFLVNAAGINRDGLLVRTKTEDMVSQLHTNLLGSMLTCKAAMRTMIQQQGGSIVNVGSIVGLKGNSGQSVYSASKGGLVGFSRALAKEVARKKIRVNVVAPGFVHTDMTKDLKEEHLKKNIPLGRFGETIEVAHAVVFLLESPYITGHVLVVDGGLQLIL.

The residue at position 1 (Met1) is an N-acetylmethionine. NADP(+)-binding positions include 11–14 (SRGI) and 34–35 (RN). At Lys40 the chain carries N6-acetyllysine. NADP(+)-binding positions include Asp56 and 83–85 (AAG). Residue Lys96 is modified to N6-acetyllysine. Ser135 contacts substrate. NADP(+) is bound by residues Tyr148, Lys152, and 181-183 (VHT). Catalysis depends on Tyr148, which acts as the Proton acceptor. Position 195 is an N6-acetyllysine (Lys195).

This sequence belongs to the short-chain dehydrogenases/reductases (SDR) family. As to quaternary structure, homotetramer (in vitro). Heterotetramer with HSD17B8; contains two molecules each of HSD17B8 and CBR4. Does not form homotetramers when HSD17B8 is coexpressed, only heterotetramers (in vitro). As to expression, detected in liver and kidney (at protein level). Displays the highest expression in neuronal and muscle tissues.

The protein localises to the mitochondrion matrix. It carries out the reaction a (3R)-hydroxyacyl-[ACP] + NADP(+) = a 3-oxoacyl-[ACP] + NADPH + H(+). The enzyme catalyses a quinone + NADPH + H(+) = a quinol + NADP(+). The protein operates within lipid metabolism; fatty acid biosynthesis. Component of the heterotetramer complex KAR (3-ketoacyl-[acyl carrier protein] reductase or 3-ketoacyl-[ACP] reductase) that forms part of the mitochondrial fatty acid synthase (mtFAS). Beta-subunit of the KAR heterotetramer complex, responsible for the 3-ketoacyl-ACP reductase activity of the mtFAS, reduces 3-oxoacyl-[ACP] to (3R)-hydroxyacyl-[ACP] in a NADPH-dependent manner with no chain length preference, thereby participating in mitochondrial fatty acid biosynthesis. The homotetramer has NADPH-dependent quinone reductase activity (in vitro), hence could play a role in protection against cytotoxicity of exogenous quinones. As a heterotetramer, it can also reduce 9,10-phenanthrenequinone, 1,4-benzoquinone and various other o-quinones and p-quinones (in vitro). This Homo sapiens (Human) protein is 3-oxoacyl-[acyl-carrier-protein] reductase (CBR4).